We begin with the raw amino-acid sequence, 405 residues long: Putative aminotransferase AatC (405 aa).

Position 238 is an N6-(pyridoxal phosphate)lysine (K238).

The protein belongs to the class-I pyridoxal-phosphate-dependent aminotransferase family. Homodimer. Requires pyridoxal 5'-phosphate as cofactor.

It is found in the cytoplasm. This Rhizobium meliloti (strain 1021) (Ensifer meliloti) protein is Putative aminotransferase AatC (aatC).